A 306-amino-acid chain; its full sequence is Reaction center protein M chain (306 aa).

3 helical membrane-spanning segments follow: residues 53–79 (GTTGVLSLVFGFFAIEIIGFNLLASVN), 111–140 (GGWWQIAGFFLTTSILLWWVRMYRRARALK), and 143–168 (THTAWAFASAIFLFLSLGFIRPLLMG). (7R,8Z)-bacteriochlorophyll b contacts are provided by His-181 and His-201. Residues 198–226 (NPFHMLSIAFLYGSALLSAMHGATILAVS) traverse the membrane as a helical segment. Fe cation-binding residues include His-218 and Glu-233. Residue Trp-251 coordinates a ubiquinone. Residues 260–286 (TMESIHRWAWWFAVLCTFTGAIGILLT) form a helical membrane-spanning segment. Position 265 (His-265) interacts with Fe cation.

The protein belongs to the reaction center PufL/M/PsbA/D family. Reaction center is composed of four bacteriochlorophylls, two bacteriopheophytins, two ubiquinones, one iron, and three highly hydrophobic polypeptide chains (designated L, M, and H).

The protein localises to the cellular chromatophore membrane. Functionally, the reaction center is a membrane-bound complex that mediates the initial photochemical event in the electron transfer process of photosynthesis. This chain is Reaction center protein M chain (pufM), found in Rhodospirillum rubrum.